Consider the following 211-residue polypeptide: Large ribosomal subunit protein bL9 (211 aa).

The disordered stretch occupies residues 183 to 211; it reads AAASEDEELAETAGVAPAEPSEEDDSAKA. The span at 202 to 211 shows a compositional bias: acidic residues; it reads PSEEDDSAKA.

This sequence belongs to the bacterial ribosomal protein bL9 family.

Binds to the 23S rRNA. This Roseobacter denitrificans (strain ATCC 33942 / OCh 114) (Erythrobacter sp. (strain OCh 114)) protein is Large ribosomal subunit protein bL9.